Consider the following 360-residue polypeptide: Phenylalanine--tRNA ligase alpha subunit (360 aa).

E255 is a Mg(2+) binding site.

Belongs to the class-II aminoacyl-tRNA synthetase family. Phe-tRNA synthetase alpha subunit type 1 subfamily. As to quaternary structure, tetramer of two alpha and two beta subunits. Mg(2+) is required as a cofactor.

The protein resides in the cytoplasm. It catalyses the reaction tRNA(Phe) + L-phenylalanine + ATP = L-phenylalanyl-tRNA(Phe) + AMP + diphosphate + H(+). This is Phenylalanine--tRNA ligase alpha subunit from Rhizorhabdus wittichii (strain DSM 6014 / CCUG 31198 / JCM 15750 / NBRC 105917 / EY 4224 / RW1) (Sphingomonas wittichii).